Reading from the N-terminus, the 84-residue chain is Large ribosomal subunit protein bL27 (84 aa).

Residues 1–25 form a disordered region; it reads MAHKKAGGSSKNGRDSAGKRLGVKR.

This sequence belongs to the bacterial ribosomal protein bL27 family.

This Syntrophotalea carbinolica (strain DSM 2380 / NBRC 103641 / GraBd1) (Pelobacter carbinolicus) protein is Large ribosomal subunit protein bL27.